We begin with the raw amino-acid sequence, 732 residues long: Acylamino-acid-releasing enzyme (732 aa).

Methionine 1 is modified (N-acetylmethionine). Phosphoserine occurs at positions 185 and 187. Residues serine 587, aspartate 675, and histidine 707 each act as charge relay system in the active site.

Belongs to the peptidase S9C family. As to quaternary structure, homotetramer.

Its subcellular location is the cytoplasm. It catalyses the reaction Cleavage of an N-acetyl or N-formyl amino acid from the N-terminus of a polypeptide.. With respect to regulation, homotetramerization is required for activity. Tetramerization results in the formation of a gated channel which is involved in substrate selection and substrate access to the catalytic sites. This enzyme catalyzes the hydrolysis of the N-terminal peptide bond of an N-acetylated peptide to generate an N-acetylated amino acid and a peptide with a free N-terminus. It preferentially cleaves off Ac-Ala, Ac-Met and Ac-Ser. Also, involved in the degradation of oxidized and glycated proteins. The sequence is that of Acylamino-acid-releasing enzyme (Apeh) from Mus musculus (Mouse).